The sequence spans 359 residues: Salicylate carboxymethyltransferase (359 aa).

An S-adenosyl-L-methionine-binding site is contributed by tyrosine 18. Substrate-binding positions include tyrosine 18, 21-25 (NSFIQ), and glutamine 25. S-adenosyl-L-methionine contacts are provided by residues glycine 59, 59–60 (GC), 59–61 (GCS), asparagine 65, 96–99 (LNDL), aspartate 98, 129–131 (SFY), and 146–148 (SYS). Substrate contacts are provided by residues 147–151 (YSLMW) and tryptophan 151. Mg(2+) contacts are provided by asparagine 162, aspartate 248, phenylalanine 250, and asparagine 251. Tyrosine 255 is a binding site for substrate.

It belongs to the methyltransferase superfamily. SABATH family.

The enzyme catalyses salicylate + S-adenosyl-L-methionine = methyl salicylate + S-adenosyl-L-homocysteine. Functionally, catalyzes the methylation of the free carboxyl end of the plant hormone salicylic acid (SA). Converts SA to SA methyl ester (MSA). The volatile compound MSA is hypothesized to act as an airborne signal that triggers defense responses in uninfected plants. MSA is an important chemoattractant for moth pollinated flowering plants. The chain is Salicylate carboxymethyltransferase (SAMT) from Clarkia breweri (Fairy fans).